The following is a 279-amino-acid chain: Zinc finger CCCH domain-containing protein 42 (279 aa).

Positions 11 to 77 (SDHRSSSTPM…KAAVEPQEYP (67 aa)) are disordered. The segment covering 16–39 (SSTPMATTTSSSASDPAAISPTPS) has biased composition (low complexity). 3 consecutive C3H1-type zinc fingers follow at residues 79–107 (RPGVPDCSYYVEFGSCKFGMRCLYNHPAK), 120–148 (RPGEHDCLHYLRFGRCKYGMNCRFNHPPD), and 186–214 (RPGTGLCSYYMNRGICKFGSNCKFHHPNS).

The protein is Zinc finger CCCH domain-containing protein 42 of Oryza sativa subsp. japonica (Rice).